The sequence spans 182 residues: Isopentenyl-diphosphate Delta-isomerase (182 aa).

Mn(2+)-binding residues include H25 and H32. The 135-residue stretch at L30 to M164 folds into the Nudix hydrolase domain. C67 is an active-site residue. H69 is a binding site for Mn(2+). E87 contributes to the Mg(2+) binding site. Positions 114 and 116 each coordinate Mn(2+). The active site involves E116.

Belongs to the IPP isomerase type 1 family. In terms of assembly, homodimer. It depends on Mg(2+) as a cofactor. Mn(2+) is required as a cofactor.

The protein localises to the cytoplasm. It catalyses the reaction isopentenyl diphosphate = dimethylallyl diphosphate. It functions in the pathway isoprenoid biosynthesis; dimethylallyl diphosphate biosynthesis; dimethylallyl diphosphate from isopentenyl diphosphate: step 1/1. Its function is as follows. Catalyzes the 1,3-allylic rearrangement of the homoallylic substrate isopentenyl (IPP) to its highly electrophilic allylic isomer, dimethylallyl diphosphate (DMAPP). The polypeptide is Isopentenyl-diphosphate Delta-isomerase (Escherichia coli O7:K1 (strain IAI39 / ExPEC)).